The sequence spans 349 residues: Ethyl acetate hydrolase (349 aa).

The 234-residue stretch at 67–300 (YIGEGRALDP…SHDQFFTVDD (234 aa)) folds into the AB hydrolase-1 domain. The Nucleophile role is filled by Ser139. Catalysis depends on residues Asp293 and His322.

It belongs to the AB hydrolase superfamily. Acetyl esterase family. In terms of assembly, homodimer.

It carries out the reaction ethyl acetate + H2O = ethanol + acetate + H(+). Functionally, esterase that catalyzes the hydrolysis of ethyl acetate. Involved in the degradation of short chain methyl ketones (MEK) such as 2-butanone and 2-hexanone. In vitro, can also hydrolyze vinyl acetate, 4-nitrophenyl acetate, methyl acetate, propyl acetate, benzyl acetate and methyl propionate. The highest activities are obtained with acetic acid esters, but the alcohol group also plays an important role, as compounds with two carbon atoms in the alcohol moiety, i.e., vinyl and ethyl acetate, are by far the preferred substrates. The polypeptide is Ethyl acetate hydrolase (Pseudomonas veronii).